A 364-amino-acid polypeptide reads, in one-letter code: Flagellar P-ring protein (364 aa).

An N-terminal signal peptide occupies residues 1–29 (MKTIGGKVFRHAAILAACVLPLWCQPALA).

The protein belongs to the FlgI family. The basal body constitutes a major portion of the flagellar organelle and consists of four rings (L,P,S, and M) mounted on a central rod.

The protein resides in the periplasm. The protein localises to the bacterial flagellum basal body. In terms of biological role, assembles around the rod to form the L-ring and probably protects the motor/basal body from shearing forces during rotation. In Dechloromonas aromatica (strain RCB), this protein is Flagellar P-ring protein.